A 386-amino-acid polypeptide reads, in one-letter code: Succinyl-diaminopimelate desuccinylase (386 aa).

Zn(2+) is bound at residue His-76. Asp-78 is a catalytic residue. Position 110 (Asp-110) interacts with Zn(2+). Glu-144 functions as the Proton acceptor in the catalytic mechanism. Residues Glu-145, Glu-173, and His-359 each contribute to the Zn(2+) site.

This sequence belongs to the peptidase M20A family. DapE subfamily. As to quaternary structure, homodimer. Zn(2+) is required as a cofactor. The cofactor is Co(2+).

The catalysed reaction is N-succinyl-(2S,6S)-2,6-diaminopimelate + H2O = (2S,6S)-2,6-diaminopimelate + succinate. It participates in amino-acid biosynthesis; L-lysine biosynthesis via DAP pathway; LL-2,6-diaminopimelate from (S)-tetrahydrodipicolinate (succinylase route): step 3/3. In terms of biological role, catalyzes the hydrolysis of N-succinyl-L,L-diaminopimelic acid (SDAP), forming succinate and LL-2,6-diaminopimelate (DAP), an intermediate involved in the bacterial biosynthesis of lysine and meso-diaminopimelic acid, an essential component of bacterial cell walls. In Chromohalobacter salexigens (strain ATCC BAA-138 / DSM 3043 / CIP 106854 / NCIMB 13768 / 1H11), this protein is Succinyl-diaminopimelate desuccinylase.